A 217-amino-acid polypeptide reads, in one-letter code: Urease accessory protein UreF (217 aa).

This sequence belongs to the UreF family. In terms of assembly, ureD, UreF and UreG form a complex that acts as a GTP-hydrolysis-dependent molecular chaperone, activating the urease apoprotein by helping to assemble the nickel containing metallocenter of UreC. The UreE protein probably delivers the nickel.

It localises to the cytoplasm. Required for maturation of urease via the functional incorporation of the urease nickel metallocenter. The protein is Urease accessory protein UreF of Ruegeria pomeroyi (strain ATCC 700808 / DSM 15171 / DSS-3) (Silicibacter pomeroyi).